We begin with the raw amino-acid sequence, 132 residues long: Mercuric resistance operon regulatory protein (132 aa).

The HTH merR-type domain maps to 2–71; the sequence is KFRIGELADK…LNEIDKLLGV (70 aa). The segment at residues 5–24 is a DNA-binding region (H-T-H motif); sequence IGELADKCGVNKETIRYYER. 3 residues coordinate Hg(2+): cysteine 79, cysteine 114, and cysteine 123.

As to quaternary structure, homodimer.

Functionally, mediates the mercuric-dependent induction of mercury resistance operon. In the absence of mercury MerR represses transcription by binding tightly to the mer operator region; when mercury is present the dimeric complex binds a single ion and becomes a potent transcriptional activator, while remaining bound to the mer site. The polypeptide is Mercuric resistance operon regulatory protein (merR1) (Bacillus cereus).